Reading from the N-terminus, the 461-residue chain is Bifunctional protein GlmU (461 aa).

Residues 1 to 232 (MNLQIIILAA…SFEVQGINNR (232 aa)) are pyrophosphorylase. UDP-N-acetyl-alpha-D-glucosamine-binding positions include 8 to 11 (LAAG), Lys-22, Gln-73, and 78 to 79 (GT). Asp-102 serves as a coordination point for Mg(2+). Residues Gly-142, Glu-157, and Asn-230 each contribute to the UDP-N-acetyl-alpha-D-glucosamine site. Asn-230 contacts Mg(2+). Residues 233–253 (QQLQQLERIWQQRAANQLMEK) form a linker region. Residues 254–461 (GATLADANRF…WKRPVKRERD (208 aa)) are N-acetyltransferase. Residues Arg-336 and Lys-354 each contribute to the UDP-N-acetyl-alpha-D-glucosamine site. The Proton acceptor role is filled by His-366. Tyr-369 and Asn-380 together coordinate UDP-N-acetyl-alpha-D-glucosamine. Acetyl-CoA contacts are provided by residues Ala-383, 389 to 390 (NY), Ser-408, and Ala-426.

In the N-terminal section; belongs to the N-acetylglucosamine-1-phosphate uridyltransferase family. It in the C-terminal section; belongs to the transferase hexapeptide repeat family. As to quaternary structure, homotrimer. It depends on Mg(2+) as a cofactor.

The protein resides in the cytoplasm. It catalyses the reaction alpha-D-glucosamine 1-phosphate + acetyl-CoA = N-acetyl-alpha-D-glucosamine 1-phosphate + CoA + H(+). It carries out the reaction N-acetyl-alpha-D-glucosamine 1-phosphate + UTP + H(+) = UDP-N-acetyl-alpha-D-glucosamine + diphosphate. It participates in nucleotide-sugar biosynthesis; UDP-N-acetyl-alpha-D-glucosamine biosynthesis; N-acetyl-alpha-D-glucosamine 1-phosphate from alpha-D-glucosamine 6-phosphate (route II): step 2/2. Its pathway is nucleotide-sugar biosynthesis; UDP-N-acetyl-alpha-D-glucosamine biosynthesis; UDP-N-acetyl-alpha-D-glucosamine from N-acetyl-alpha-D-glucosamine 1-phosphate: step 1/1. It functions in the pathway bacterial outer membrane biogenesis; LPS lipid A biosynthesis. Functionally, catalyzes the last two sequential reactions in the de novo biosynthetic pathway for UDP-N-acetylglucosamine (UDP-GlcNAc). The C-terminal domain catalyzes the transfer of acetyl group from acetyl coenzyme A to glucosamine-1-phosphate (GlcN-1-P) to produce N-acetylglucosamine-1-phosphate (GlcNAc-1-P), which is converted into UDP-GlcNAc by the transfer of uridine 5-monophosphate (from uridine 5-triphosphate), a reaction catalyzed by the N-terminal domain. The sequence is that of Bifunctional protein GlmU from Legionella pneumophila (strain Corby).